The primary structure comprises 303 residues: Methionyl-tRNA formyltransferase (303 aa).

109-112 (SLLP) is a binding site for (6S)-5,6,7,8-tetrahydrofolate.

It belongs to the Fmt family.

It carries out the reaction L-methionyl-tRNA(fMet) + (6R)-10-formyltetrahydrofolate = N-formyl-L-methionyl-tRNA(fMet) + (6S)-5,6,7,8-tetrahydrofolate + H(+). In terms of biological role, attaches a formyl group to the free amino group of methionyl-tRNA(fMet). The formyl group appears to play a dual role in the initiator identity of N-formylmethionyl-tRNA by promoting its recognition by IF2 and preventing the misappropriation of this tRNA by the elongation apparatus. This is Methionyl-tRNA formyltransferase from Helicobacter pylori (strain ATCC 700392 / 26695) (Campylobacter pylori).